Consider the following 1245-residue polypeptide: ATP-dependent helicase/nuclease subunit A (1245 aa).

Residues 4–477 (TKWTDEQLSA…IQLYKNFRSR (474 aa)) enclose the UvrD-like helicase ATP-binding domain. 25-32 (AAAGSGKT) lines the ATP pocket. A UvrD-like helicase C-terminal domain is found at 517 to 815 (KFKDTIVGGP…RIMSIHKSKG (299 aa)).

Belongs to the helicase family. AddA subfamily. As to quaternary structure, heterodimer of AddA and AddB/RexB. Mg(2+) serves as cofactor.

It carries out the reaction Couples ATP hydrolysis with the unwinding of duplex DNA by translocating in the 3'-5' direction.. It catalyses the reaction ATP + H2O = ADP + phosphate + H(+). Its function is as follows. The heterodimer acts as both an ATP-dependent DNA helicase and an ATP-dependent, dual-direction single-stranded exonuclease. Recognizes the chi site generating a DNA molecule suitable for the initiation of homologous recombination. The AddA nuclease domain is required for chi fragment generation; this subunit has the helicase and 3' -&gt; 5' nuclease activities. The sequence is that of ATP-dependent helicase/nuclease subunit A from Clostridium beijerinckii (strain ATCC 51743 / NCIMB 8052) (Clostridium acetobutylicum).